The primary structure comprises 865 residues: Centrosomal protein of 97 kDa (865 aa).

LRR repeat units lie at residues 37 to 58 (DIHTLILDKNQIIKLENLEKCK), 59 to 80 (RLIQLSVANNRLVRMMGVAKLT), 81 to 102 (LLRVLNLPHNSIGCVEGLKELV), 103 to 124 (HLEWLNLAGNNLKAMEQINSCT), 125 to 146 (ALQHLDLSDNNISQIGDLSKLV), 147 to 168 (SLKTLLLHGNIITSLRMAPAYL), 171 to 192 (SLAILSLAENEIRDLNEISFLA), and 196 to 205 (ELEQLSIMNN). The LRRCT domain maps to 211 to 249 (TPSIPGFDYRPYIVSWCLNLRVLDGYVISQKESLKAEWL). Positions 300 to 750 (HQRQLMNQSQ…RYGKESDLGD (451 aa)) are CCP110-binding. Residues S308, S413, and S500 each carry the phosphoserine modification. The disordered stretch occupies residues 506–529 (ESTEQKQSDIKKPENTQPENKETI). Basic and acidic residues predominate over residues 508–527 (TEQKQSDIKKPENTQPENKE). At S530 the chain carries Phosphoserine. T542 is modified (phosphothreonine). The IQ domain occupies 558–587 (LNDAATKLQACWRGFYARNYNPQAKDVRYE). The tract at residues 587–865 (EIRLRRMQEH…FQLLHVGVTV (279 aa)) is interaction with MPHOSPH9. Positions 715-769 (QHSLDFEKSSTEGSESSIMGNSIDTVRYGKESDLGDVSEEHGEWNKESSNNEQDN) are disordered. Over residues 725–738 (TEGSESSIMGNSID) the composition is skewed to polar residues. Residues 741 to 760 (RYGKESDLGDVSEEHGEWNK) show a composition bias toward basic and acidic residues. S763 is subject to Phosphoserine.

As to quaternary structure, interacts with CALM1, CEP76, KIF24 and TALPID3. Interacts with CCP110. ENKD1 competes with CEP97 for binding to CCP110, destabilizing the interaction between CP110 and CEP97 which promotes the removal of CCP110 and CEP97 from the mother centriole and allows the initiation of ciliogenesis. Via its interaction with CCP110, may indirectly interact with HERC2 and NEURL4. Interacts with MPHOSPH9.

It localises to the cytoplasm. It is found in the cytoskeleton. The protein resides in the microtubule organizing center. The protein localises to the centrosome. Its subcellular location is the centriole. In terms of biological role, acts as a key negative regulator of ciliogenesis in collaboration with CCP110 by capping the mother centriole thereby preventing cilia formation. Required for recruitment of CCP110 to the centrosome. This is Centrosomal protein of 97 kDa (CEP97) from Homo sapiens (Human).